A 376-amino-acid polypeptide reads, in one-letter code: TATA box-binding protein-like 2 (376 aa).

The tract at residues 103–184 (PDEVTQENKD…SDSLSLASIT (82 aa)) is disordered. A compositionally biased stretch (basic and acidic residues) spans 108–122 (QENKDQPVISKHETE). Over residues 126-159 (ESQSPQSRLPSPSEQDVGLGLNSSSLSNSHSQLH) the composition is skewed to low complexity. Residues 175-184 (SDSLSLASIT) are compositionally biased toward polar residues.

Belongs to the TBP family. As to quaternary structure, interacts with TAF3.

It is found in the cytoplasm. Its subcellular location is the nucleus. Its function is as follows. Transcription factor required in complex with TAF3 for the differentiation of myoblasts into myocytes. The complex replaces TFIID at specific promoters at an early stage in the differentiation process. The protein is TATA box-binding protein-like 2 of Pan troglodytes (Chimpanzee).